Here is a 932-residue protein sequence, read N- to C-terminus: DNA mismatch repair protein MutS (932 aa).

615–622 (GPNMAGKS) provides a ligand contact to ATP.

It belongs to the DNA mismatch repair MutS family.

In terms of biological role, this protein is involved in the repair of mismatches in DNA. It is possible that it carries out the mismatch recognition step. This protein has a weak ATPase activity. This chain is DNA mismatch repair protein MutS, found in Clostridium botulinum (strain Okra / Type B1).